The chain runs to 588 residues: Polyamine deacetylase HDAC10 (588 aa).

A histone deacetylase region spans residues M1–E302. H135 is a catalytic residue.

Belongs to the histone deacetylase family. HD type 2 subfamily. Interacts with HDAC3. Interacts with HDAC2 and NCOR2/SMRT. Interacts with HSPA8/HSC70. Interacts with MSH2.

Its subcellular location is the cytoplasm. It is found in the nucleus. It carries out the reaction N(8)-acetylspermidine + H2O = spermidine + acetate. The enzyme catalyses N-acetylputrescine + H2O = putrescine + acetate. It catalyses the reaction N-acetylcadaverine + H2O = cadaverine + acetate. The catalysed reaction is N(6)-acetyl-L-lysyl-[protein] + H2O = L-lysyl-[protein] + acetate. Its function is as follows. Polyamine deacetylase (PDAC), which acts preferentially on N(8)-acetylspermidine, and also on acetylcadaverine and acetylputrescine. Exhibits attenuated catalytic activity toward N(1),N(8)-diacetylspermidine and very low activity, if any, toward N(1)-acetylspermidine. Histone deacetylase activity has been observed in vitro. Has also been shown to be involved in MSH2 deacetylation. The physiological relevance of protein/histone deacetylase activity is unclear and could be very weak. May play a role in the promotion of late stages of autophagy, possibly autophagosome-lysosome fusion and/or lysosomal exocytosis in neuroblastoma cells. May play a role in homologous recombination. May promote DNA mismatch repair. The chain is Polyamine deacetylase HDAC10 (Hdac10) from Rattus norvegicus (Rat).